The sequence spans 184 residues: Bifunctional protein PyrR (184 aa).

The short motif at Ile99 to Thr111 is the PRPP-binding element.

It belongs to the purine/pyrimidine phosphoribosyltransferase family. PyrR subfamily. Homodimer and homohexamer; in equilibrium.

The enzyme catalyses UMP + diphosphate = 5-phospho-alpha-D-ribose 1-diphosphate + uracil. Regulates transcriptional attenuation of the pyrimidine nucleotide (pyr) operon by binding in a uridine-dependent manner to specific sites on pyr mRNA. This disrupts an antiterminator hairpin in the RNA and favors formation of a downstream transcription terminator, leading to a reduced expression of downstream genes. In terms of biological role, also displays a weak uracil phosphoribosyltransferase activity which is not physiologically significant. The polypeptide is Bifunctional protein PyrR (Acetivibrio thermocellus (strain ATCC 27405 / DSM 1237 / JCM 9322 / NBRC 103400 / NCIMB 10682 / NRRL B-4536 / VPI 7372) (Clostridium thermocellum)).